We begin with the raw amino-acid sequence, 184 residues long: Large ribosomal subunit protein uL15 (184 aa).

Residues 1–50 form a disordered region; sequence MDLSSLRPAKGAVKNKKRVGRGQGSGNGTTAGKGNKGQQARSGYKRPINE. Over residues 21–35 the composition is skewed to gly residues; sequence RGQGSGNGTTAGKGN.

This sequence belongs to the universal ribosomal protein uL15 family. As to quaternary structure, part of the 50S ribosomal subunit.

Its function is as follows. Binds to the 23S rRNA. The protein is Large ribosomal subunit protein uL15 of Chlorobium luteolum (strain DSM 273 / BCRC 81028 / 2530) (Pelodictyon luteolum).